The following is a 315-amino-acid chain: tRNA dimethylallyltransferase (315 aa).

13–20 (GPTASGKT) provides a ligand contact to ATP. A substrate-binding site is contributed by 15 to 20 (TASGKT). 3 interaction with substrate tRNA regions span residues 38–41 (DSAL), 162–166 (QRIQR), and 245–250 (RCVGYR).

Belongs to the IPP transferase family. Monomer. Requires Mg(2+) as cofactor.

The enzyme catalyses adenosine(37) in tRNA + dimethylallyl diphosphate = N(6)-dimethylallyladenosine(37) in tRNA + diphosphate. Functionally, catalyzes the transfer of a dimethylallyl group onto the adenine at position 37 in tRNAs that read codons beginning with uridine, leading to the formation of N6-(dimethylallyl)adenosine (i(6)A). This chain is tRNA dimethylallyltransferase, found in Methylobacillus flagellatus (strain ATCC 51484 / DSM 6875 / VKM B-1610 / KT).